The sequence spans 325 residues: Tetraacyldisaccharide 4'-kinase (325 aa).

Position 54–61 (54–61 (SVGGTGKT)) interacts with ATP.

It belongs to the LpxK family.

It carries out the reaction a lipid A disaccharide + ATP = a lipid IVA + ADP + H(+). Its pathway is glycolipid biosynthesis; lipid IV(A) biosynthesis; lipid IV(A) from (3R)-3-hydroxytetradecanoyl-[acyl-carrier-protein] and UDP-N-acetyl-alpha-D-glucosamine: step 6/6. In terms of biological role, transfers the gamma-phosphate of ATP to the 4'-position of a tetraacyldisaccharide 1-phosphate intermediate (termed DS-1-P) to form tetraacyldisaccharide 1,4'-bis-phosphate (lipid IVA). The chain is Tetraacyldisaccharide 4'-kinase from Rickettsia akari (strain Hartford).